Here is a 1352-residue protein sequence, read N- to C-terminus: DNA-directed RNA polymerase subunit beta (1352 aa).

This sequence belongs to the RNA polymerase beta chain family. The RNAP catalytic core consists of 2 alpha, 1 beta, 1 beta' and 1 omega subunit. When a sigma factor is associated with the core the holoenzyme is formed, which can initiate transcription.

It catalyses the reaction RNA(n) + a ribonucleoside 5'-triphosphate = RNA(n+1) + diphosphate. In terms of biological role, DNA-dependent RNA polymerase catalyzes the transcription of DNA into RNA using the four ribonucleoside triphosphates as substrates. In Hydrogenovibrio crunogenus (strain DSM 25203 / XCL-2) (Thiomicrospira crunogena), this protein is DNA-directed RNA polymerase subunit beta.